Reading from the N-terminus, the 213-residue chain is Ribonuclease HII (213 aa).

An RNase H type-2 domain is found at 25-213 (KTLCGVDEAG…FKPVKQLLPH (189 aa)). A divalent metal cation is bound by residues Asp31, Glu32, and Asp124.

Belongs to the RNase HII family. It depends on Mn(2+) as a cofactor. The cofactor is Mg(2+).

It localises to the cytoplasm. It catalyses the reaction Endonucleolytic cleavage to 5'-phosphomonoester.. In terms of biological role, endonuclease that specifically degrades the RNA of RNA-DNA hybrids. This is Ribonuclease HII from Magnetococcus marinus (strain ATCC BAA-1437 / JCM 17883 / MC-1).